A 301-amino-acid chain; its full sequence is Pantothenate synthetase (301 aa).

ATP is bound at residue 30 to 37 (MGNLHEGH). The Proton donor role is filled by histidine 37. Glutamine 61 is a (R)-pantoate binding site. Glutamine 61 contacts beta-alanine. Residue 149–152 (GEKD) coordinates ATP. Glutamine 155 is a (R)-pantoate binding site. ATP-binding positions include valine 178 and 186–189 (MSSR).

It belongs to the pantothenate synthetase family. In terms of assembly, homodimer.

It localises to the cytoplasm. It catalyses the reaction (R)-pantoate + beta-alanine + ATP = (R)-pantothenate + AMP + diphosphate + H(+). It functions in the pathway cofactor biosynthesis; (R)-pantothenate biosynthesis; (R)-pantothenate from (R)-pantoate and beta-alanine: step 1/1. Functionally, catalyzes the condensation of pantoate with beta-alanine in an ATP-dependent reaction via a pantoyl-adenylate intermediate. This chain is Pantothenate synthetase, found in Vibrio vulnificus (strain YJ016).